Here is a 231-residue protein sequence, read N- to C-terminus: PIAGSMVLAAILLKLGGYGIIRMMQIFPTTKTDLFLPFIVLALWGAILANLTCLQQTDLKSLIAYSSISHMGLVVAAIIIQTPWGLSGAMALMIAHGFTSSALFCLANMTYERTHTRILILTRGLHNTLPMATTWWLMTNLMNIAIPPSMNFTGELLIMSSLFNWCPTTIIILGLSMLITASYSLHMFLSTQMGPTLLNNQTEPTHSREHLLMTLHLVPLLMISMKPELVI.

Helical transmembrane passes span 1–21 (PIAG…YGII), 34–54 (LFLP…LTCL), 63–85 (IAYS…TPWG), 89–111 (AMAL…NMTY), 124–146 (GLHN…NIAI), and 169–189 (TIII…HMFL).

This sequence belongs to the complex I subunit 4 family.

Its subcellular location is the mitochondrion membrane. The enzyme catalyses a ubiquinone + NADH + 5 H(+)(in) = a ubiquinol + NAD(+) + 4 H(+)(out). Core subunit of the mitochondrial membrane respiratory chain NADH dehydrogenase (Complex I) that is believed to belong to the minimal assembly required for catalysis. Complex I functions in the transfer of electrons from NADH to the respiratory chain. The immediate electron acceptor for the enzyme is believed to be ubiquinone. This Crotalus lepidus (Banded rock rattlesnake) protein is NADH-ubiquinone oxidoreductase chain 4 (MT-ND4).